The following is a 226-amino-acid chain: Small ribosomal subunit protein uS3 (226 aa).

One can recognise a KH type-2 domain in the interval 39-107 (VRNFIRKKLA…PVHINIEEIR (69 aa)).

This sequence belongs to the universal ribosomal protein uS3 family. Part of the 30S ribosomal subunit. Forms a tight complex with proteins S10 and S14.

Its function is as follows. Binds the lower part of the 30S subunit head. Binds mRNA in the 70S ribosome, positioning it for translation. This is Small ribosomal subunit protein uS3 from Alkalilimnicola ehrlichii (strain ATCC BAA-1101 / DSM 17681 / MLHE-1).